Reading from the N-terminus, the 716-residue chain is 1,4-alpha-glucan branching enzyme GlgB (716 aa).

The Nucleophile role is filled by D398. E451 functions as the Proton donor in the catalytic mechanism.

Belongs to the glycosyl hydrolase 13 family. GlgB subfamily. As to quaternary structure, monomer.

It carries out the reaction Transfers a segment of a (1-&gt;4)-alpha-D-glucan chain to a primary hydroxy group in a similar glucan chain.. Its pathway is glycan biosynthesis; glycogen biosynthesis. Catalyzes the formation of the alpha-1,6-glucosidic linkages in glycogen by scission of a 1,4-alpha-linked oligosaccharide from growing alpha-1,4-glucan chains and the subsequent attachment of the oligosaccharide to the alpha-1,6 position. The sequence is that of 1,4-alpha-glucan branching enzyme GlgB from Nitrobacter winogradskyi (strain ATCC 25391 / DSM 10237 / CIP 104748 / NCIMB 11846 / Nb-255).